The sequence spans 147 residues: Hemoglobin subunit beta-M (147 aa).

V2 is subject to N-acetylvaline. One can recognise a Globin domain in the interval 3–147 (HLTSEEKNCI…VAHALAHKYH (145 aa)). T13 carries the post-translational modification Phosphothreonine. A Phosphoserine modification is found at S45. N6-acetyllysine is present on K60. Residue H64 participates in heme b binding. The residue at position 83 (K83) is an N6-acetyllysine. H93 is a heme b binding site. C94 carries the post-translational modification S-nitrosocysteine. Residue K145 is modified to N6-acetyllysine.

Belongs to the globin family. As to quaternary structure, heterotetramer of two alpha chains and two beta chains. Red blood cells.

Functionally, involved in oxygen transport from the lung to the various peripheral tissues. The polypeptide is Hemoglobin subunit beta-M (HBB) (Didelphis virginiana (North American opossum)).